Reading from the N-terminus, the 399-residue chain is S-adenosylmethionine synthase (399 aa).

His-16 serves as a coordination point for ATP. Asp-18 lines the Mg(2+) pocket. Glu-44 contacts K(+). L-methionine-binding residues include Glu-57 and Gln-100. Residues 100 to 110 (QSSDIAQGVNE) are flexible loop. ATP is bound by residues 177–179 (DAK), 244–245 (RF), Asp-253, 259–260 (RK), Ala-276, and Lys-280. Asp-253 provides a ligand contact to L-methionine. Lys-284 is an L-methionine binding site.

This sequence belongs to the AdoMet synthase family. Homotetramer; dimer of dimers. Mg(2+) serves as cofactor. The cofactor is K(+).

Its subcellular location is the cytoplasm. It catalyses the reaction L-methionine + ATP + H2O = S-adenosyl-L-methionine + phosphate + diphosphate. It participates in amino-acid biosynthesis; S-adenosyl-L-methionine biosynthesis; S-adenosyl-L-methionine from L-methionine: step 1/1. Its function is as follows. Catalyzes the formation of S-adenosylmethionine (AdoMet) from methionine and ATP. The overall synthetic reaction is composed of two sequential steps, AdoMet formation and the subsequent tripolyphosphate hydrolysis which occurs prior to release of AdoMet from the enzyme. This is S-adenosylmethionine synthase from Lactococcus lactis subsp. lactis (strain IL1403) (Streptococcus lactis).